The following is a 458-amino-acid chain: Bifunctional protein GlmU (458 aa).

Residues 1–229 form a pyrophosphorylase region; the sequence is MNKFAIVLAA…FDESLGVNDR (229 aa). UDP-N-acetyl-alpha-D-glucosamine contacts are provided by residues 8-11, K22, Q72, and 77-78; these read LAAG and GT. D102 contacts Mg(2+). 4 residues coordinate UDP-N-acetyl-alpha-D-glucosamine: G139, E154, N169, and N227. Position 227 (N227) interacts with Mg(2+). The interval 230–250 is linker; the sequence is VALSQAEATMRKRINHEHMVN. The N-acetyltransferase stretch occupies residues 251–458; the sequence is GVTLIDPATT…AKKMPHYRGQ (208 aa). UDP-N-acetyl-alpha-D-glucosamine-binding residues include R332 and K350. H362 serves as the catalytic Proton acceptor. Positions 365 and 376 each coordinate UDP-N-acetyl-alpha-D-glucosamine. Acetyl-CoA-binding residues include A379, S404, A422, and R439.

This sequence in the N-terminal section; belongs to the N-acetylglucosamine-1-phosphate uridyltransferase family. The protein in the C-terminal section; belongs to the transferase hexapeptide repeat family. Homotrimer. Requires Mg(2+) as cofactor.

It is found in the cytoplasm. It catalyses the reaction alpha-D-glucosamine 1-phosphate + acetyl-CoA = N-acetyl-alpha-D-glucosamine 1-phosphate + CoA + H(+). It carries out the reaction N-acetyl-alpha-D-glucosamine 1-phosphate + UTP + H(+) = UDP-N-acetyl-alpha-D-glucosamine + diphosphate. The protein operates within nucleotide-sugar biosynthesis; UDP-N-acetyl-alpha-D-glucosamine biosynthesis; N-acetyl-alpha-D-glucosamine 1-phosphate from alpha-D-glucosamine 6-phosphate (route II): step 2/2. It participates in nucleotide-sugar biosynthesis; UDP-N-acetyl-alpha-D-glucosamine biosynthesis; UDP-N-acetyl-alpha-D-glucosamine from N-acetyl-alpha-D-glucosamine 1-phosphate: step 1/1. Its pathway is bacterial outer membrane biogenesis; LPS lipid A biosynthesis. Functionally, catalyzes the last two sequential reactions in the de novo biosynthetic pathway for UDP-N-acetylglucosamine (UDP-GlcNAc). The C-terminal domain catalyzes the transfer of acetyl group from acetyl coenzyme A to glucosamine-1-phosphate (GlcN-1-P) to produce N-acetylglucosamine-1-phosphate (GlcNAc-1-P), which is converted into UDP-GlcNAc by the transfer of uridine 5-monophosphate (from uridine 5-triphosphate), a reaction catalyzed by the N-terminal domain. The polypeptide is Bifunctional protein GlmU (Lactococcus lactis subsp. cremoris (strain MG1363)).